The chain runs to 174 residues: uncharacterized protein (174 aa).

This is an uncharacterized protein from Saccharomyces cerevisiae (strain ATCC 204508 / S288c) (Baker's yeast).